We begin with the raw amino-acid sequence, 122 residues long: Large ribosomal subunit protein uL14c (122 aa).

Belongs to the universal ribosomal protein uL14 family. Part of the 50S ribosomal subunit.

It is found in the plastid. Its subcellular location is the chloroplast. In terms of biological role, binds to 23S rRNA. The polypeptide is Large ribosomal subunit protein uL14c (Dioscorea elephantipes (Elephant's foot yam)).